The following is a 70-amino-acid chain: uncharacterized protein (70 aa).

2 helical membrane passes run V19–L39 and L40–F60.

It is found in the cell membrane. This is an uncharacterized protein from Streptomyces coelicolor (strain ATCC BAA-471 / A3(2) / M145).